Here is a 202-residue protein sequence, read N- to C-terminus: Josephin-1 (202 aa).

Serine 15 carries the post-translational modification Phosphoserine. Positions 23–202 constitute a Josephin domain; sequence PPQIYHEKQR…EAHQSWRTDV (180 aa). The active-site Nucleophile is the cysteine 36. Histidine 139 acts as the Proton acceptor in catalysis.

Interacts with beta-actin/ACTB. Post-translationally, monoubiquitinated. Ubiquitination activates deubiquitination activity in vitro.

It localises to the cell membrane. The protein resides in the cytoplasm. It catalyses the reaction Thiol-dependent hydrolysis of ester, thioester, amide, peptide and isopeptide bonds formed by the C-terminal Gly of ubiquitin (a 76-residue protein attached to proteins as an intracellular targeting signal).. In terms of biological role, deubiquitinates monoubiquitinated probes (in vitro). When ubiquitinated, cleaves 'Lys-63'-linked and 'Lys-48'-linked poly-ubiquitin chains (in vitro), hence may act as a deubiquitinating enzyme. May increase macropinocytosis and suppress clathrin- and caveolae-mediated endocytosis. May enhance membrane dynamics and cell motility independently of its catalytic activity. In Pongo abelii (Sumatran orangutan), this protein is Josephin-1 (JOSD1).